We begin with the raw amino-acid sequence, 600 residues long: Sulfite reductase [NADPH] flavoprotein alpha-component (600 aa).

The 139-residue stretch at 63 to 201 (ITLISASQTG…AAQAWRQRVV (139 aa)) folds into the Flavodoxin-like domain. FMN-binding positions include 69–74 (SQTGNA), 116–119 (STQG), and 152–161 (LGDTSYEHFC). Residues 235–449 (ESPLTATLSV…IEHNDNFRLP (215 aa)) enclose the FAD-binding FR-type domain. FAD-binding positions include T323, A357, 387-390 (RLYS), 405-407 (TVG), and 420-423 (GGAS). NADP(+) contacts are provided by residues 520–521 (SR), 526–530 (KIYVQ), and D562. Residue Y600 coordinates FAD.

This sequence belongs to the NADPH-dependent sulphite reductase flavoprotein subunit CysJ family. It in the N-terminal section; belongs to the flavodoxin family. In the C-terminal section; belongs to the flavoprotein pyridine nucleotide cytochrome reductase family. In terms of assembly, alpha(8)-beta(8). The alpha component is a flavoprotein, the beta component is a hemoprotein. It depends on FAD as a cofactor. Requires FMN as cofactor.

The catalysed reaction is hydrogen sulfide + 3 NADP(+) + 3 H2O = sulfite + 3 NADPH + 4 H(+). The protein operates within sulfur metabolism; hydrogen sulfide biosynthesis; hydrogen sulfide from sulfite (NADPH route): step 1/1. Its function is as follows. Component of the sulfite reductase complex that catalyzes the 6-electron reduction of sulfite to sulfide. This is one of several activities required for the biosynthesis of L-cysteine from sulfate. The flavoprotein component catalyzes the electron flow from NADPH -&gt; FAD -&gt; FMN to the hemoprotein component. This Cronobacter sakazakii (strain ATCC BAA-894) (Enterobacter sakazakii) protein is Sulfite reductase [NADPH] flavoprotein alpha-component.